Here is a 313-residue protein sequence, read N- to C-terminus: Ribosomal RNA small subunit methyltransferase H (313 aa).

Residues 35 to 37 (GGH), aspartate 55, phenylalanine 80, aspartate 102, and glutamine 109 each bind S-adenosyl-L-methionine.

The protein belongs to the methyltransferase superfamily. RsmH family.

Its subcellular location is the cytoplasm. The enzyme catalyses cytidine(1402) in 16S rRNA + S-adenosyl-L-methionine = N(4)-methylcytidine(1402) in 16S rRNA + S-adenosyl-L-homocysteine + H(+). Functionally, specifically methylates the N4 position of cytidine in position 1402 (C1402) of 16S rRNA. This is Ribosomal RNA small subunit methyltransferase H from Shewanella amazonensis (strain ATCC BAA-1098 / SB2B).